The primary structure comprises 299 residues: Bifunctional protein FolD (299 aa).

NADP(+) contacts are provided by residues 168-170 (GRS), Ser-193, and Ile-234.

Belongs to the tetrahydrofolate dehydrogenase/cyclohydrolase family. Homodimer.

It carries out the reaction (6R)-5,10-methylene-5,6,7,8-tetrahydrofolate + NADP(+) = (6R)-5,10-methenyltetrahydrofolate + NADPH. The catalysed reaction is (6R)-5,10-methenyltetrahydrofolate + H2O = (6R)-10-formyltetrahydrofolate + H(+). The protein operates within one-carbon metabolism; tetrahydrofolate interconversion. In terms of biological role, catalyzes the oxidation of 5,10-methylenetetrahydrofolate to 5,10-methenyltetrahydrofolate and then the hydrolysis of 5,10-methenyltetrahydrofolate to 10-formyltetrahydrofolate. This chain is Bifunctional protein FolD, found in Bartonella quintana (strain Toulouse) (Rochalimaea quintana).